The following is a 624-amino-acid chain: Chaperone protein DnaK (624 aa).

The residue at position 174 (T174) is a Phosphothreonine; by autocatalysis. Disordered stretches follow at residues 544 to 563 (KKAQ…DDLS) and 576 to 624 (NAQK…DDKK). The span at 581 to 600 (QQAQGGPASGAATDAGAAQG) shows a compositional bias: low complexity. Residues 601–624 (SDDKKSDDDTINGDYKDVSDDDKK) show a composition bias toward basic and acidic residues.

Belongs to the heat shock protein 70 family.

Acts as a chaperone. The chain is Chaperone protein DnaK from Lacticaseibacillus casei (strain BL23) (Lactobacillus casei).